Here is a 173-residue protein sequence, read N- to C-terminus: Ribosome maturation factor RimM (173 aa).

Positions 95 to 169 (DPDEFYDHQL…VIEIDPPEGL (75 aa)) constitute a PRC barrel domain.

Belongs to the RimM family. As to quaternary structure, binds ribosomal protein uS19.

Its subcellular location is the cytoplasm. Its function is as follows. An accessory protein needed during the final step in the assembly of 30S ribosomal subunit, possibly for assembly of the head region. Essential for efficient processing of 16S rRNA. May be needed both before and after RbfA during the maturation of 16S rRNA. It has affinity for free ribosomal 30S subunits but not for 70S ribosomes. This chain is Ribosome maturation factor RimM, found in Mycobacteroides abscessus (strain ATCC 19977 / DSM 44196 / CCUG 20993 / CIP 104536 / JCM 13569 / NCTC 13031 / TMC 1543 / L948) (Mycobacterium abscessus).